The sequence spans 565 residues: Dihydroxy-acid dehydratase (565 aa).

Asp80 serves as a coordination point for Mg(2+). Cys121 is a binding site for [2Fe-2S] cluster. Mg(2+)-binding residues include Asp122 and Lys123. The residue at position 123 (Lys123) is an N6-carboxylysine. Residue Cys194 participates in [2Fe-2S] cluster binding. Residue Glu447 participates in Mg(2+) binding. The active-site Proton acceptor is the Ser473.

It belongs to the IlvD/Edd family. In terms of assembly, homodimer. [2Fe-2S] cluster serves as cofactor. Requires Mg(2+) as cofactor.

It carries out the reaction (2R)-2,3-dihydroxy-3-methylbutanoate = 3-methyl-2-oxobutanoate + H2O. It catalyses the reaction (2R,3R)-2,3-dihydroxy-3-methylpentanoate = (S)-3-methyl-2-oxopentanoate + H2O. Its pathway is amino-acid biosynthesis; L-isoleucine biosynthesis; L-isoleucine from 2-oxobutanoate: step 3/4. It participates in amino-acid biosynthesis; L-valine biosynthesis; L-valine from pyruvate: step 3/4. In terms of biological role, functions in the biosynthesis of branched-chain amino acids. Catalyzes the dehydration of (2R,3R)-2,3-dihydroxy-3-methylpentanoate (2,3-dihydroxy-3-methylvalerate) into 2-oxo-3-methylpentanoate (2-oxo-3-methylvalerate) and of (2R)-2,3-dihydroxy-3-methylbutanoate (2,3-dihydroxyisovalerate) into 2-oxo-3-methylbutanoate (2-oxoisovalerate), the penultimate precursor to L-isoleucine and L-valine, respectively. The sequence is that of Dihydroxy-acid dehydratase from Chlorobium phaeovibrioides (strain DSM 265 / 1930) (Prosthecochloris vibrioformis (strain DSM 265)).